A 227-amino-acid polypeptide reads, in one-letter code: Cytochrome c oxidase subunit 2 (227 aa).

The Mitochondrial intermembrane segment spans residues 1–14; sequence MAYPFQLGFQDATS. A helical transmembrane segment spans residues 15–45; sequence PIMEELLHFHDHALMIVFLISSLVLYLISVM. Residues 46–59 lie on the Mitochondrial matrix side of the membrane; that stretch reads LTTSLTHTSTMDAQ. Residues 60-87 form a helical membrane-spanning segment; sequence EVETIWTILPAMILIMIALPSLRILYMM. The Mitochondrial intermembrane portion of the chain corresponds to 88-227; the sequence is DEINNPYLTV…YFEKWSSSML (140 aa). Cu cation contacts are provided by H161, C196, E198, C200, H204, and M207. E198 contributes to the Mg(2+) binding site. A Phosphotyrosine modification is found at Y218.

This sequence belongs to the cytochrome c oxidase subunit 2 family. As to quaternary structure, component of the cytochrome c oxidase (complex IV, CIV), a multisubunit enzyme composed of 14 subunits. The complex is composed of a catalytic core of 3 subunits MT-CO1, MT-CO2 and MT-CO3, encoded in the mitochondrial DNA, and 11 supernumerary subunits COX4I, COX5A, COX5B, COX6A, COX6B, COX6C, COX7A, COX7B, COX7C, COX8 and NDUFA4, which are encoded in the nuclear genome. The complex exists as a monomer or a dimer and forms supercomplexes (SCs) in the inner mitochondrial membrane with NADH-ubiquinone oxidoreductase (complex I, CI) and ubiquinol-cytochrome c oxidoreductase (cytochrome b-c1 complex, complex III, CIII), resulting in different assemblies (supercomplex SCI(1)III(2)IV(1) and megacomplex MCI(2)III(2)IV(2)). Found in a complex with TMEM177, COA6, COX18, COX20, SCO1 and SCO2. Interacts with TMEM177 in a COX20-dependent manner. Interacts with COX20. Interacts with COX16. Cu cation serves as cofactor.

The protein resides in the mitochondrion inner membrane. It catalyses the reaction 4 Fe(II)-[cytochrome c] + O2 + 8 H(+)(in) = 4 Fe(III)-[cytochrome c] + 2 H2O + 4 H(+)(out). Its function is as follows. Component of the cytochrome c oxidase, the last enzyme in the mitochondrial electron transport chain which drives oxidative phosphorylation. The respiratory chain contains 3 multisubunit complexes succinate dehydrogenase (complex II, CII), ubiquinol-cytochrome c oxidoreductase (cytochrome b-c1 complex, complex III, CIII) and cytochrome c oxidase (complex IV, CIV), that cooperate to transfer electrons derived from NADH and succinate to molecular oxygen, creating an electrochemical gradient over the inner membrane that drives transmembrane transport and the ATP synthase. Cytochrome c oxidase is the component of the respiratory chain that catalyzes the reduction of oxygen to water. Electrons originating from reduced cytochrome c in the intermembrane space (IMS) are transferred via the dinuclear copper A center (CU(A)) of subunit 2 and heme A of subunit 1 to the active site in subunit 1, a binuclear center (BNC) formed by heme A3 and copper B (CU(B)). The BNC reduces molecular oxygen to 2 water molecules using 4 electrons from cytochrome c in the IMS and 4 protons from the mitochondrial matrix. The protein is Cytochrome c oxidase subunit 2 (MT-CO2) of Rousettus leschenaultii (Leschenault's rousette).